Reading from the N-terminus, the 371-residue chain is tRNA-specific 2-thiouridylase MnmA (371 aa).

ATP is bound by residues 11–18 and M37; that span reads GMSGGVDS. The interaction with target base in tRNA stretch occupies residues 97–99; sequence NPD. The Nucleophile role is filled by C102. A disulfide bond links C102 and C199. G127 is a binding site for ATP. The tract at residues 149 to 151 is interaction with tRNA; the sequence is KDQ. C199 functions as the Cysteine persulfide intermediate in the catalytic mechanism. Positions 311-312 are interaction with tRNA; the sequence is RY.

This sequence belongs to the MnmA/TRMU family.

It is found in the cytoplasm. The catalysed reaction is S-sulfanyl-L-cysteinyl-[protein] + uridine(34) in tRNA + AH2 + ATP = 2-thiouridine(34) in tRNA + L-cysteinyl-[protein] + A + AMP + diphosphate + H(+). Catalyzes the 2-thiolation of uridine at the wobble position (U34) of tRNA, leading to the formation of s(2)U34. In Idiomarina loihiensis (strain ATCC BAA-735 / DSM 15497 / L2-TR), this protein is tRNA-specific 2-thiouridylase MnmA.